An 882-amino-acid polypeptide reads, in one-letter code: DNA mismatch repair protein MutS (882 aa).

640-647 (GPNMGGKS) lines the ATP pocket.

It belongs to the DNA mismatch repair MutS family.

Functionally, this protein is involved in the repair of mismatches in DNA. It is possible that it carries out the mismatch recognition step. This protein has a weak ATPase activity. The chain is DNA mismatch repair protein MutS from Albidiferax ferrireducens (strain ATCC BAA-621 / DSM 15236 / T118) (Rhodoferax ferrireducens).